A 129-amino-acid polypeptide reads, in one-letter code: Defensin-like protein 182 (129 aa).

The first 26 residues, Met-1–Gly-26, serve as a signal peptide directing secretion. Disulfide bonds link Cys-29–Cys-70, Cys-36–Cys-55, Cys-39–Cys-64, Cys-43–Cys-66, Cys-83–Cys-129, Cys-94–Cys-114, Cys-99–Cys-123, and Cys-103–Cys-125.

The protein belongs to the DEFL family.

It localises to the secreted. In terms of biological role, confers broad-spectrum resistance to pathogens. The chain is Defensin-like protein 182 (PDF3.2) from Arabidopsis thaliana (Mouse-ear cress).